The chain runs to 274 residues: Proliferating cell nuclear antigen 1 (274 aa).

A DNA-binding region spans residues 61–80 (RCDRERVLGVNIASLNKVFK).

Belongs to the PCNA family. Homotrimer. Interacts with ORC1 (via PIP-box motif); the interaction occurs during DNA replication in trophozoites. Interacts with ORC5; the interaction occurs during the trophozoite stage but not at the late schizont stage. Interacts with FEN1.

It is found in the nucleus. It localises to the chromosome. Its subcellular location is the cytoplasm. Auxiliary protein of DNA polymerase delta and is involved in the control of DNA replication by increasing the polymerase processibility during elongation of the leading strand. Involved in DNA damage response. The sequence is that of Proliferating cell nuclear antigen 1 from Plasmodium falciparum (isolate 3D7).